The sequence spans 257 residues: Hydroxyacylglutathione hydrolase (257 aa).

7 residues coordinate Zn(2+): His-54, His-56, Asp-58, His-59, His-113, Asp-137, and His-175.

It belongs to the metallo-beta-lactamase superfamily. Glyoxalase II family. In terms of assembly, monomer. Zn(2+) is required as a cofactor.

It catalyses the reaction an S-(2-hydroxyacyl)glutathione + H2O = a 2-hydroxy carboxylate + glutathione + H(+). It participates in secondary metabolite metabolism; methylglyoxal degradation; (R)-lactate from methylglyoxal: step 2/2. Thiolesterase that catalyzes the hydrolysis of S-D-lactoyl-glutathione to form glutathione and D-lactic acid. The polypeptide is Hydroxyacylglutathione hydrolase (Trichormus variabilis (strain ATCC 29413 / PCC 7937) (Anabaena variabilis)).